The chain runs to 303 residues: Diaminopimelate epimerase (303 aa).

Residues asparagine 15, glutamine 47, and asparagine 67 each contribute to the substrate site. Cysteine 76 acts as the Proton donor in catalysis. Residues glycine 77–asparagine 78, asparagine 163, asparagine 197, and glutamate 215–arginine 216 each bind substrate. The active-site Proton acceptor is the cysteine 224. Residue glycine 225–serine 226 coordinates substrate.

It belongs to the diaminopimelate epimerase family. Homodimer.

Its subcellular location is the cytoplasm. It carries out the reaction (2S,6S)-2,6-diaminopimelate = meso-2,6-diaminopimelate. It functions in the pathway amino-acid biosynthesis; L-lysine biosynthesis via DAP pathway; DL-2,6-diaminopimelate from LL-2,6-diaminopimelate: step 1/1. In terms of biological role, catalyzes the stereoinversion of LL-2,6-diaminopimelate (L,L-DAP) to meso-diaminopimelate (meso-DAP), a precursor of L-lysine and an essential component of the bacterial peptidoglycan. The protein is Diaminopimelate epimerase of Allorhizobium ampelinum (strain ATCC BAA-846 / DSM 112012 / S4) (Agrobacterium vitis (strain S4)).